Reading from the N-terminus, the 144-residue chain is Large ribosomal subunit protein uL11 (144 aa).

It belongs to the universal ribosomal protein uL11 family. Part of the ribosomal stalk of the 50S ribosomal subunit. Interacts with L10 and the large rRNA to form the base of the stalk. L10 forms an elongated spine to which L12 dimers bind in a sequential fashion forming a multimeric L10(L12)X complex. One or more lysine residues are methylated.

Functionally, forms part of the ribosomal stalk which helps the ribosome interact with GTP-bound translation factors. The chain is Large ribosomal subunit protein uL11 from Neisseria meningitidis serogroup C (strain 053442).